Reading from the N-terminus, the 332-residue chain is Fructose-1,6-bisphosphatase class 1 (332 aa).

The Mg(2+) site is built by E94, D116, L118, and D119. Substrate contacts are provided by residues 119–122 (DGSS), N211, Y239, 257–259 (YLY), and K269. E275 is a binding site for Mg(2+).

Belongs to the FBPase class 1 family. As to quaternary structure, homotetramer. The cofactor is Mg(2+).

The protein resides in the cytoplasm. The enzyme catalyses beta-D-fructose 1,6-bisphosphate + H2O = beta-D-fructose 6-phosphate + phosphate. It functions in the pathway carbohydrate biosynthesis; Calvin cycle. The polypeptide is Fructose-1,6-bisphosphatase class 1 (Synechococcus sp. (strain JA-3-3Ab) (Cyanobacteria bacterium Yellowstone A-Prime)).